Reading from the N-terminus, the 66-residue chain is Cold shock protein CspA (66 aa).

Residues 1–66 form the CSD domain; the sequence is MKQGTVKWFN…GPQAANVVKL (66 aa).

The protein resides in the cytoplasm. Its function is as follows. Involved in cold stress response. In Staphylococcus haemolyticus (strain JCSC1435), this protein is Cold shock protein CspA (cspA).